The primary structure comprises 533 residues: Conglutin beta 2 (533 aa).

Positions 1 to 30 (MGKMRVRFPTLVLVLGIVFLMAVSIGIAYG) are cleaved as a signal peptide. Residues 31–108 (EKDVLKSHER…EQQQGSPSYS (78 aa)) constitute a propeptide that is removed on maturation. Basic and acidic residues-rich tracts occupy residues 37 to 51 (SHER…EWQP) and 79 to 99 (SGYE…REQE). Disordered regions lie at residues 37 to 123 (SHER…QRFQ) and 315 to 337 (KHAQ…LRSN). Cupin type-1 domains follow at residues 115–273 (YHFS…EEIQ) and 332–494 (FNLR…EDIE). Residues N363 and N444 are each glycosylated (N-linked (GlcNAc...) asparagine). The tract at residues 503 to 533 (SYFANGQPQQQQQQQSEKEGRRGRRGSSLPF) is disordered.

Belongs to the 7S seed storage protein family. Multimers. Give rise to a complex array of processed forms, due to a large number of processing sites and changes in glycosylation.

Its function is as follows. Seed storage protein. Accumulates during seed development and is hydrolyzed after germination to provide a carbon and nitrogen source for the developing seedling. Functionally, has a lectin-like activity. This chain is Conglutin beta 2, found in Lupinus albus (White lupine).